We begin with the raw amino-acid sequence, 434 residues long: L-2-hydroxyglutarate dehydrogenase, mitochondrial (434 aa).

The protein belongs to the L2HGDH family. FAD is required as a cofactor.

The protein localises to the mitochondrion. It carries out the reaction (S)-2-hydroxyglutarate + A = 2-oxoglutarate + AH2. This is L-2-hydroxyglutarate dehydrogenase, mitochondrial from Caenorhabditis briggsae.